We begin with the raw amino-acid sequence, 237 residues long: MNYDSVYKSNKLRSFPYSRRRGIISLKERIIELNRSGKRGVIAEYKRRSPSGLKVDYSIEDYLSYVMEHRIAGLSILTEPSFFNGSFQDVVVAHRYNIPILVKDFVPDSEFVDYGFNAGGDAVLVILDFLDYESIKRIVERAADLGMDVLEEFHNQDALKRQYIRDNVMIGYNRRDLTNLLMDEKIPDFSGEVRILESGISIDNVKNLDLKFQGYLIGTSILKKDGTLEYLEMEGII.

The protein belongs to the TrpC family.

The catalysed reaction is 1-(2-carboxyphenylamino)-1-deoxy-D-ribulose 5-phosphate + H(+) = (1S,2R)-1-C-(indol-3-yl)glycerol 3-phosphate + CO2 + H2O. Its pathway is amino-acid biosynthesis; L-tryptophan biosynthesis; L-tryptophan from chorismate: step 4/5. This chain is Indole-3-glycerol phosphate synthase, found in Thermoplasma volcanium (strain ATCC 51530 / DSM 4299 / JCM 9571 / NBRC 15438 / GSS1).